The sequence spans 483 residues: Glutarate-semialdehyde dehydrogenase (483 aa).

NADP(+) contacts are provided by residues 156 to 157 (WN), 180 to 183 (KPAS), and 233 to 234 (GS). The active-site Proton acceptor is the glutamate 255. Leucine 256 contributes to the NADP(+) binding site. Cysteine 289 serves as the catalytic Nucleophile. Glutamate 386 is an NADP(+) binding site.

The protein belongs to the aldehyde dehydrogenase family.

The enzyme catalyses 5-oxopentanoate + NADP(+) + H2O = glutarate + NADPH + 2 H(+). The protein operates within amino-acid degradation. In terms of biological role, catalyzes the conversion of 5-oxopentanoate (glutarate semialdehyde) to glutarate. Involved in L-lysine degradation. This chain is Glutarate-semialdehyde dehydrogenase, found in Pseudomonas aeruginosa (strain ATCC 15692 / DSM 22644 / CIP 104116 / JCM 14847 / LMG 12228 / 1C / PRS 101 / PAO1).